Reading from the N-terminus, the 270-residue chain is Glutamate 5-kinase (270 aa).

K18 is an ATP binding site. Positions 54, 141, and 153 each coordinate substrate. Residue 173–174 (SD) participates in ATP binding.

This sequence belongs to the glutamate 5-kinase family.

Its subcellular location is the cytoplasm. It carries out the reaction L-glutamate + ATP = L-glutamyl 5-phosphate + ADP. It functions in the pathway amino-acid biosynthesis; L-proline biosynthesis; L-glutamate 5-semialdehyde from L-glutamate: step 1/2. Its function is as follows. Catalyzes the transfer of a phosphate group to glutamate to form L-glutamate 5-phosphate. This Leifsonia xyli subsp. xyli (strain CTCB07) protein is Glutamate 5-kinase.